The chain runs to 513 residues: ATP synthase subunit alpha (513 aa).

Glycine 169–threonine 176 contacts ATP.

The protein belongs to the ATPase alpha/beta chains family. In terms of assembly, F-type ATPases have 2 components, CF(1) - the catalytic core - and CF(0) - the membrane proton channel. CF(1) has five subunits: alpha(3), beta(3), gamma(1), delta(1), epsilon(1). CF(0) has three main subunits: a(1), b(2) and c(9-12). The alpha and beta chains form an alternating ring which encloses part of the gamma chain. CF(1) is attached to CF(0) by a central stalk formed by the gamma and epsilon chains, while a peripheral stalk is formed by the delta and b chains.

The protein localises to the cell inner membrane. It carries out the reaction ATP + H2O + 4 H(+)(in) = ADP + phosphate + 5 H(+)(out). Functionally, produces ATP from ADP in the presence of a proton gradient across the membrane. The alpha chain is a regulatory subunit. The sequence is that of ATP synthase subunit alpha from Burkholderia vietnamiensis (strain G4 / LMG 22486) (Burkholderia cepacia (strain R1808)).